A 463-amino-acid polypeptide reads, in one-letter code: Dopaminechrome tautomerase (463 aa).

This sequence belongs to the major royal jelly protein family.

It localises to the secreted. The enzyme catalyses dopaminechrome = 5,6-dihydroxyindole. It functions in the pathway pigment biosynthesis; melanin biosynthesis. In terms of biological role, catalyzes the conversion of dopaminechrome to 5,6-dihydroxyindole in the eumelanin biosynthetic pathway originating from dopamine. Catalyzes tautomerization of dopaminechrome to 5,6-dihydroxyindole during eumelanin biosynthesis. Acts both dopaminechrome and N-methyl dopaminechrome but not on dopachrome or other aminochromes tested. The protein is Dopaminechrome tautomerase of Drosophila melanogaster (Fruit fly).